The primary structure comprises 311 residues: tRNA-cytidine(32) 2-sulfurtransferase (311 aa).

Positions Ser47 to Ser52 match the PP-loop motif motif. Positions 122, 125, and 213 each coordinate [4Fe-4S] cluster.

This sequence belongs to the TtcA family. Homodimer. Mg(2+) serves as cofactor. [4Fe-4S] cluster is required as a cofactor.

It localises to the cytoplasm. It carries out the reaction cytidine(32) in tRNA + S-sulfanyl-L-cysteinyl-[cysteine desulfurase] + AH2 + ATP = 2-thiocytidine(32) in tRNA + L-cysteinyl-[cysteine desulfurase] + A + AMP + diphosphate + H(+). It participates in tRNA modification. Catalyzes the ATP-dependent 2-thiolation of cytidine in position 32 of tRNA, to form 2-thiocytidine (s(2)C32). The sulfur atoms are provided by the cysteine/cysteine desulfurase (IscS) system. In Klebsiella pneumoniae subsp. pneumoniae (strain ATCC 700721 / MGH 78578), this protein is tRNA-cytidine(32) 2-sulfurtransferase.